Here is a 552-residue protein sequence, read N- to C-terminus: Putative pentatricopeptide repeat-containing protein At1g64310 (552 aa).

PPR repeat units lie at residues 39 to 69, 70 to 104, 105 to 139, 140 to 170, 171 to 205, 206 to 240, 241 to 271, 272 to 306, 307 to 341, 342 to 372, 373 to 407, 408 to 438, and 444 to 474; these read DPYF…FPER, SVFL…DTRP, DNFT…GLGF, DQIC…IPDP, DLAL…GHQP, NCYT…NLDS, HSYV…ISEP, DLVA…GKKP, DCVL…GLEL, DIKV…IPEK, NIVS…GLIP, DEIT…MKSE, and QTEH…LQKP. A type E motif; degenerate region spans residues 479–552; that stretch reads ILGALLSCCE…GGKLPGISWF (74 aa).

This sequence belongs to the PPR family. PCMP-E subfamily.

This chain is Putative pentatricopeptide repeat-containing protein At1g64310 (PCMP-E65), found in Arabidopsis thaliana (Mouse-ear cress).